A 116-amino-acid polypeptide reads, in one-letter code: Putative membrane protein (116 aa).

The helical transmembrane segment at 13–33 (VISIITFILVIAIFVIEIVSC) threads the bilayer.

Its subcellular location is the host membrane. This is Putative membrane protein from Alethinophid 1 reptarenavirus (isolate AlRrV1/Boa/USA/BC/2009) (Golden Gate virus).